The chain runs to 663 residues: Bifunctional polymyxin resistance protein ArnA (663 aa).

The formyltransferase ArnAFT stretch occupies residues 1-304; the sequence is MKAVVFAYHD…ELGLVAGMRL (304 aa). His-104 (proton donor; for formyltransferase activity) is an active-site residue. (6R)-10-formyltetrahydrofolate-binding positions include Arg-114 and 136–140; that span reads TMRPD. The dehydrogenase ArnADH stretch occupies residues 316–663; it reads RLTRVLILGV…GAVSTGVEHD (348 aa). Residues Asp-349 and 370–371 each bind NAD(+); that span reads DI. UDP-alpha-D-glucuronate-binding positions include Ala-395, Tyr-400, and 434 to 435; that span reads TS. Glu-436 acts as the Proton acceptor; for decarboxylase activity in catalysis. UDP-alpha-D-glucuronate contacts are provided by residues Arg-462, Asn-494, 528 to 537, and Tyr-615; that span reads QLVDGGAQKR. Arg-621 functions as the Proton donor; for decarboxylase activity in the catalytic mechanism.

In the N-terminal section; belongs to the Fmt family. UDP-L-Ara4N formyltransferase subfamily. It in the C-terminal section; belongs to the NAD(P)-dependent epimerase/dehydratase family. UDP-glucuronic acid decarboxylase subfamily. Homohexamer, formed by a dimer of trimers.

It catalyses the reaction UDP-alpha-D-glucuronate + NAD(+) = UDP-beta-L-threo-pentopyranos-4-ulose + CO2 + NADH. The enzyme catalyses UDP-4-amino-4-deoxy-beta-L-arabinose + (6R)-10-formyltetrahydrofolate = UDP-4-deoxy-4-formamido-beta-L-arabinose + (6S)-5,6,7,8-tetrahydrofolate + H(+). Its pathway is nucleotide-sugar biosynthesis; UDP-4-deoxy-4-formamido-beta-L-arabinose biosynthesis; UDP-4-deoxy-4-formamido-beta-L-arabinose from UDP-alpha-D-glucuronate: step 1/3. It participates in nucleotide-sugar biosynthesis; UDP-4-deoxy-4-formamido-beta-L-arabinose biosynthesis; UDP-4-deoxy-4-formamido-beta-L-arabinose from UDP-alpha-D-glucuronate: step 3/3. The protein operates within bacterial outer membrane biogenesis; lipopolysaccharide biosynthesis. In terms of biological role, bifunctional enzyme that catalyzes the oxidative decarboxylation of UDP-glucuronic acid (UDP-GlcUA) to UDP-4-keto-arabinose (UDP-Ara4O) and the addition of a formyl group to UDP-4-amino-4-deoxy-L-arabinose (UDP-L-Ara4N) to form UDP-L-4-formamido-arabinose (UDP-L-Ara4FN). The modified arabinose is attached to lipid A and is required for resistance to polymyxin and cationic antimicrobial peptides. The chain is Bifunctional polymyxin resistance protein ArnA from Aeromonas salmonicida (strain A449).